Consider the following 387-residue polypeptide: MSRTNLPIQPAKMSDATSSKPQIFSIQDLKQAASDKMSQMYRDYYNGGAMDNITLATNEAAFDRYLLRPRVLRNVSNIDMTTTLWGTKAALPLGVSPSAMHRLAHADGEVGTSKACAARHIPMILSALSNDTLEDVSGQSSDGSTPYAIQVSPFKNRQITTNLLNRAKAAGYKAVVLTVDAPMFGRRLDDLRNGFSVPPGFSFPNLSAQTQSGSGGLGGGIPDLSFDTGATWEEKIAWMKSQTDLQLWVKGVTSPLDAQIAIEQGVDGIIISNHGGRQLDTTPATIDILREIAPVAKGKTRIAIDGGFRRGSDIFKAVALGADFVFVGRIAIWGLAYDGSNGVGLALDLLINEFKLCMGLAGCSKISDITPAHLSLLNAKGVLEGVY.

A disordered region spans residues 1-20 (MSRTNLPIQPAKMSDATSSK). One can recognise an FMN hydroxy acid dehydrogenase domain in the interval 18–379 (SSKPQIFSIQ…TPAHLSLLNA (362 aa)). Residue Tyr-44 participates in a 2-oxocarboxylate binding. Positions 126, 150, and 178 each coordinate FMN. Arg-187 provides a ligand contact to a 2-oxocarboxylate. Lys-250 serves as a coordination point for FMN. The active-site Proton acceptor is His-274. Residue Arg-277 coordinates a 2-oxocarboxylate. FMN is bound by residues 305 to 309 (DGGFR) and 328 to 329 (GR).

Belongs to the FMN-dependent alpha-hydroxy acid dehydrogenase family. Requires FMN as cofactor.

It functions in the pathway mycotoxin biosynthesis. Its function is as follows. Oxidase; part of the gene cluster that mediates the biosynthesis of fusaric acid, a mycotoxin with low to moderate toxicity to animals and humans, but with high phytotoxic properties. L-aspartate is suggested as fusaric acid amino acid precursor that is activated and further processed to O-acetyl-L-homoserine by cluster enzymes aspartate kinase FUB3 and homoserine O-acetyltransferase FUB5, as well as enzymes of the primary metabolism. The polyketide synthase (PKS) FUB1 generates the triketide trans-2-hexenal which is presumptively released by the hydrolase FUB4 and linked to the NRPS-bound amino acid precursor by NAD(P)-dependent dehydrogenase FUB6. FUB1, FUB4, and the non-canonical NRPS Fub8 may form an enzyme complex. Further processing of the NRPS-bound intermediate might be carried out by FUB6 and the sulfhydrylase FUB7, enabling a spontaneous electrocyclization to close the carbon backbone of fusaric acid. Dihydrofusaric acid is likely to be released via reduction by the thioester reductase (TR) domain of FUB8 whereupon the final oxidation to fusaric acid may (also) be performed by the FMN-dependent dehydrogenase FUB9. The chain is Oxidase FUB9 from Gibberella moniliformis (strain M3125 / FGSC 7600) (Maize ear and stalk rot fungus).